The following is a 1051-amino-acid chain: Protein transport protein Sec16B (1051 aa).

Positions 1–23 (MEPWVPQTQGRTTGPSRDTNRGL) are enriched in polar residues. The segment at 1–109 (MEPWVPQTQG…PYQRYHTPTP (109 aa)) is disordered. Basic and acidic residues predominate over residues 39-63 (DKYHQWQDAHKNSKSQQDLRDDHQQ). The segment covering 64–77 (SHSVSRSGEWSQPV) has biased composition (polar residues). A phosphoserine mark is found at Ser70 and Ser137. The interval 157-203 (EKHNGTFGANSDTQFQFTSKNPYRDSPASVSGQEQPGEFFPESEAQK) is disordered. Polar residues predominate over residues 163-177 (FGANSDTQFQFTSKN). Residues Ser182, Ser185, and Ser245 each carry the phosphoserine modification. Residues 263–708 (APMRFYVPHV…KHKDLEQNRT (446 aa)) form a central conserved domain (CCD); required for localization to endoplasmic reticulum exit sites region. The span at 703-715 (LEQNRTGAPRDPD) shows a compositional bias: basic and acidic residues. Disordered regions lie at residues 703–754 (LEQN…LWST), 798–820 (SGAS…EDML), and 850–1051 (TPAA…TQPC). The segment covering 737–754 (GHQNYSEDSEYSSTLWST) has biased composition (polar residues). Over residues 798 to 809 (SGASGSSVAVTG) the composition is skewed to low complexity. Thr850 bears the Phosphothreonine mark. 5 positions are modified to phosphoserine: Ser860, Ser863, Ser866, Ser874, and Ser875. A compositionally biased stretch (basic and acidic residues) spans 877-897 (GADKPSHPDASQKGKLGDGKN). Residues 900–920 (SSGFGWFSWFRSKPASSVSTS) are compositionally biased toward low complexity. Positions 921 to 932 (GDEDSSDSSDSE) are enriched in acidic residues. The segment covering 936-947 (RASSPHHASPGL) has biased composition (low complexity). Positions 984 to 993 (EGMGIGGFSG) are enriched in gly residues. Polar residues predominate over residues 1022 to 1037 (NPSQVPQLPTASSLNR).

It belongs to the SEC16 family. In terms of assembly, SEC16A and SEC16B are each present in multiple copies in a heteromeric complex. Interacts with TFG. Interacts with SEC13. In terms of tissue distribution, liver.

It localises to the endoplasmic reticulum membrane. The protein resides in the golgi apparatus membrane. Plays a role in the organization of the endoplasmic reticulum exit sites (ERES), also known as transitional endoplasmic reticulum (tER). Required for secretory cargo traffic from the endoplasmic reticulum to the Golgi apparatus. Involved in peroxisome biogenesis. Regulates the transport of peroxisomal biogenesis factors PEX3 and PEX16 from the ER to peroxisomes. This is Protein transport protein Sec16B (Sec16b) from Mus musculus (Mouse).